A 484-amino-acid chain; its full sequence is Glutamate--tRNA ligase (484 aa).

The short motif at 11-21 (PSPTGYLHIGN) is the 'HIGH' region element. A 'KMSKS' region motif is present at residues 252–256 (KLSKR). Lys-255 contacts ATP.

It belongs to the class-I aminoacyl-tRNA synthetase family. Glutamate--tRNA ligase type 1 subfamily. As to quaternary structure, monomer.

The protein localises to the cytoplasm. The catalysed reaction is tRNA(Glu) + L-glutamate + ATP = L-glutamyl-tRNA(Glu) + AMP + diphosphate. Catalyzes the attachment of glutamate to tRNA(Glu) in a two-step reaction: glutamate is first activated by ATP to form Glu-AMP and then transferred to the acceptor end of tRNA(Glu). The protein is Glutamate--tRNA ligase of Staphylococcus aureus (strain MRSA252).